Here is a 469-residue protein sequence, read N- to C-terminus: Phosphoenolpyruvate carboxylase (469 aa).

It belongs to the PEPCase type 2 family. Homotetramer. Requires Mg(2+) as cofactor.

The enzyme catalyses oxaloacetate + phosphate = phosphoenolpyruvate + hydrogencarbonate. Functionally, catalyzes the irreversible beta-carboxylation of phosphoenolpyruvate (PEP) to form oxaloacetate (OAA), a four-carbon dicarboxylic acid source for the tricarboxylic acid cycle. The polypeptide is Phosphoenolpyruvate carboxylase (Pyrococcus horikoshii (strain ATCC 700860 / DSM 12428 / JCM 9974 / NBRC 100139 / OT-3)).